The primary structure comprises 416 residues: UDP-N-acetylmuramoylalanine--D-glutamate ligase (416 aa).

108 to 114 (GTTGKTT) contacts ATP.

This sequence belongs to the MurCDEF family.

It localises to the cytoplasm. The catalysed reaction is UDP-N-acetyl-alpha-D-muramoyl-L-alanine + D-glutamate + ATP = UDP-N-acetyl-alpha-D-muramoyl-L-alanyl-D-glutamate + ADP + phosphate + H(+). The protein operates within cell wall biogenesis; peptidoglycan biosynthesis. Cell wall formation. Catalyzes the addition of glutamate to the nucleotide precursor UDP-N-acetylmuramoyl-L-alanine (UMA). The sequence is that of UDP-N-acetylmuramoylalanine--D-glutamate ligase from Chlamydia trachomatis serovar L2b (strain UCH-1/proctitis).